The sequence spans 124 residues: Small ribosomal subunit protein bS6 (124 aa).

This sequence belongs to the bacterial ribosomal protein bS6 family.

Its function is as follows. Binds together with bS18 to 16S ribosomal RNA. This chain is Small ribosomal subunit protein bS6, found in Actinobacillus pleuropneumoniae serotype 5b (strain L20).